Consider the following 340-residue polypeptide: Anthranilate phosphoribosyltransferase (340 aa).

Residues Gly-78, Gly-81–Asp-82, Thr-86, Asn-88–Thr-91, Lys-106–Ser-114, and Ser-118 contribute to the 5-phospho-alpha-D-ribose 1-diphosphate site. Gly-78 contributes to the anthranilate binding site. Ser-90 serves as a coordination point for Mg(2+). Asn-109 lines the anthranilate pocket. Arg-164 contributes to the anthranilate binding site. Mg(2+) contacts are provided by Asp-223 and Glu-224.

This sequence belongs to the anthranilate phosphoribosyltransferase family. Homodimer. Mg(2+) serves as cofactor.

The enzyme catalyses N-(5-phospho-beta-D-ribosyl)anthranilate + diphosphate = 5-phospho-alpha-D-ribose 1-diphosphate + anthranilate. It functions in the pathway amino-acid biosynthesis; L-tryptophan biosynthesis; L-tryptophan from chorismate: step 2/5. Functionally, catalyzes the transfer of the phosphoribosyl group of 5-phosphorylribose-1-pyrophosphate (PRPP) to anthranilate to yield N-(5'-phosphoribosyl)-anthranilate (PRA). This chain is Anthranilate phosphoribosyltransferase, found in Bacillus pumilus (Bacillus mesentericus).